The primary structure comprises 343 residues: Signal peptide peptidase 1 (343 aa).

Residues 1–19 lie on the Lumenal side of the membrane; the sequence is MKTHERAANLALAGLSLAP. Residues 20 to 40 form a helical membrane-spanning segment; the sequence is LVVKVEPNVNVILTACLAVYV. Over 41-62 the chain is Cytoplasmic; the sequence is GCYRSVKPTPPSETMSKEHAMR. A helical transmembrane segment spans residues 63-83; the sequence is FPLVGSAMLLSLFLLFKFLSK. The Lumenal segment spans residues 84 to 87; sequence DLVN. Residues 88 to 108 traverse the membrane as a helical segment; sequence AVLTAYFFILGIAALCATLLP. The Cytoplasmic segment spans residues 109 to 136; it reads SIKRFLPKEWNDNAIVWCAPFFHSLSVE. A helical transmembrane segment spans residues 137–157; the sequence is FTKSQVVASIPGFFFCIWYAA. The Lumenal portion of the chain corresponds to 158-160; sequence KKH. A helical membrane pass occupies residues 161-181; it reads WLANNVLGISFCIQGIEMLSL. Residues 182-188 are Cytoplasmic-facing; the sequence is GSFKTGA. A helical membrane pass occupies residues 189–209; that stretch reads ILLAGLFFYDIFWVFFTPVMV. The active site involves Asp-198. The Lumenal portion of the chain corresponds to 210–230; the sequence is SVAKSFDAPIKLLFPTGDAAR. The helical transmembrane segment at 231–251 threads the bilayer; that stretch reads PFSMLGLGDIVIPGIFVALAL. Residue Asp-239 is part of the active site. Over 252–266 the chain is Cytoplasmic; it reads RFDVSRGIKNRYFNS. The chain crosses the membrane as a helical span at residues 267 to 287; that stretch reads AFLGYTVGLTVTIIVMNWFQA. Residues 288–290 lie on the Lumenal side of the membrane; that stretch reads AQP. The PAL signature appears at 290-292; sequence PAL. A helical membrane pass occupies residues 291–311; the sequence is ALLYIVPGVIGFVAVHCLWNG. The Cytoplasmic segment spans residues 312–343; that stretch reads EVKPLLEYNESKAEEEDAVEEDTDSKQNKKEE. The disordered stretch occupies residues 322–343; the sequence is SKAEEEDAVEEDTDSKQNKKEE. The segment covering 324-334 has biased composition (acidic residues); the sequence is AEEEDAVEEDT. An Endoplasmic reticulum targeting signal motif is present at residues 340 to 343; the sequence is KKEE.

The protein belongs to the peptidase A22B family. Ubiquitous.

The protein resides in the endoplasmic reticulum membrane. Its function is as follows. Intramembrane-cleaving aspartic protease (I-CLiP) that cleaves type II membrane signal peptides in the hydrophobic plane of the membrane. Catalyzes intramembrane proteolysis of some signal peptides after they have been cleaved from a preprotein, resulting in the release of the fragment from the ER membrane into the cytoplasm. The polypeptide is Signal peptide peptidase 1 (SPP1) (Oryza sativa subsp. japonica (Rice)).